The sequence spans 137 residues: Large ribosomal subunit protein uL16 (137 aa).

The segment covering 1 to 17 (MLSPKRTKFRKQQRGRM) has biased composition (basic residues). Positions 1 to 24 (MLSPKRTKFRKQQRGRMRGNANSG) are disordered.

Belongs to the universal ribosomal protein uL16 family. Part of the 50S ribosomal subunit.

Functionally, binds 23S rRNA and is also seen to make contacts with the A and possibly P site tRNAs. This Trichodesmium erythraeum (strain IMS101) protein is Large ribosomal subunit protein uL16.